A 422-amino-acid chain; its full sequence is Succinate--CoA ligase [ADP-forming] subunit beta, mitochondrial (422 aa).

Residues 1–27 (MVRGSLGKLASRALSVAGKWQHQQLRR) constitute a mitochondrion transit peptide. The ATP-grasp domain occupies 36 to 279 (AELMGKYGIN…TTQEDPREVA (244 aa)). ATP-binding positions include K75, 82 to 84 (GRG), and E142. The Mg(2+) site is built by N234 and D248. Residues N299 and 356–358 (GIM) each bind substrate.

This sequence belongs to the succinate/malate CoA ligase beta subunit family. Heterodimer of an alpha and a beta subunit. Requires Mg(2+) as cofactor.

The protein localises to the mitochondrion. It carries out the reaction succinate + ATP + CoA = succinyl-CoA + ADP + phosphate. It functions in the pathway carbohydrate metabolism; tricarboxylic acid cycle; succinate from succinyl-CoA (ligase route): step 1/1. In terms of biological role, succinyl-CoA synthetase functions in the citric acid cycle (TCA), coupling the hydrolysis of succinyl-CoA to the synthesis of ATP and thus represents the only step of substrate-level phosphorylation in the TCA. The beta subunit provides nucleotide specificity of the enzyme and binds the substrate succinate, while the binding sites for coenzyme A and phosphate are found in the alpha subunit. This Oryza sativa subsp. japonica (Rice) protein is Succinate--CoA ligase [ADP-forming] subunit beta, mitochondrial.